The chain runs to 396 residues: Elongation factor Tu (396 aa).

One can recognise a tr-type G domain in the interval 10–206; sequence KPHVNVGTIG…ALDDYIPEPE (197 aa). Residues 19–26 form a G1 region; sequence GHVDHGKT. Residue 19-26 coordinates GTP; sequence GHVDHGKT. Thr26 is a binding site for Mg(2+). The G2 stretch occupies residues 60 to 64; the sequence is GITIA. Residues 81 to 84 form a G3 region; that stretch reads DCPG. GTP contacts are provided by residues 81–85 and 136–139; these read DCPGH and NKAD. The G4 stretch occupies residues 136-139; that stretch reads NKAD. The tract at residues 174-176 is G5; sequence SAL.

It belongs to the TRAFAC class translation factor GTPase superfamily. Classic translation factor GTPase family. EF-Tu/EF-1A subfamily. In terms of assembly, monomer.

It is found in the cytoplasm. It carries out the reaction GTP + H2O = GDP + phosphate + H(+). In terms of biological role, GTP hydrolase that promotes the GTP-dependent binding of aminoacyl-tRNA to the A-site of ribosomes during protein biosynthesis. This is Elongation factor Tu from Methylococcus capsulatus (strain ATCC 33009 / NCIMB 11132 / Bath).